A 190-amino-acid polypeptide reads, in one-letter code: Peptidyl-tRNA hydrolase (190 aa).

Tyrosine 18 serves as a coordination point for tRNA. Residue histidine 23 is the Proton acceptor of the active site. The tRNA site is built by tyrosine 69, asparagine 71, and asparagine 117.

This sequence belongs to the PTH family. As to quaternary structure, monomer.

The protein localises to the cytoplasm. The catalysed reaction is an N-acyl-L-alpha-aminoacyl-tRNA + H2O = an N-acyl-L-amino acid + a tRNA + H(+). Functionally, hydrolyzes ribosome-free peptidyl-tRNAs (with 1 or more amino acids incorporated), which drop off the ribosome during protein synthesis, or as a result of ribosome stalling. Its function is as follows. Catalyzes the release of premature peptidyl moieties from peptidyl-tRNA molecules trapped in stalled 50S ribosomal subunits, and thus maintains levels of free tRNAs and 50S ribosomes. The sequence is that of Peptidyl-tRNA hydrolase from Rhodococcus erythropolis (strain PR4 / NBRC 100887).